The chain runs to 319 residues: Chromoplast-specific carotenoid-associated protein C1, chromoplastic (319 aa).

The N-terminal 55 residues, 1 to 55, are a transit peptide targeting the chromoplast; sequence MTSIAFWNAFTVNPFPAAARRSPPPLTPFTSGALSPARKPRILEISHPRTLPSFR.

This sequence belongs to the PAP/fibrillin family. As to expression, expressed in flower buds and floral lip tissues. Not detected in roots and leaves. Specifically expressed in conical papillate cells of adaxial epidermis of lip tissues.

It is found in the plastid. Its subcellular location is the chromoplast. In terms of biological role, may be involved in carotenoid sequestration within chromoplasts. This Oncidium hybrid cultivar (Orchid) protein is Chromoplast-specific carotenoid-associated protein C1, chromoplastic (CHRC1).